The following is a 214-amino-acid chain: Adenylate kinase (214 aa).

Residue 10–15 (GAGKGT) coordinates ATP. The segment at 30-59 (STGDMFRAAIKAGTELGKQAKALMDEGKLV) is NMP. Residues Thr31, Arg36, 57–59 (KLV), 85–88 (GFPR), and Gln92 contribute to the AMP site. An LID region spans residues 122-159 (GRRVHQTSGRSYHIVYNPPKVEGKDDVTGEDLIIRADD). ATP-binding positions include Arg123 and 132-133 (SY). 2 residues coordinate AMP: Arg156 and Arg167. Gln200 serves as a coordination point for ATP.

It belongs to the adenylate kinase family. As to quaternary structure, monomer.

The protein resides in the cytoplasm. It catalyses the reaction AMP + ATP = 2 ADP. Its pathway is purine metabolism; AMP biosynthesis via salvage pathway; AMP from ADP: step 1/1. Catalyzes the reversible transfer of the terminal phosphate group between ATP and AMP. Plays an important role in cellular energy homeostasis and in adenine nucleotide metabolism. This chain is Adenylate kinase, found in Haemophilus influenzae (strain PittEE).